Here is a 300-residue protein sequence, read N- to C-terminus: N-acetylmannosamine kinase (300 aa).

Residues 5–12 (ALDIGGTK) and 132–139 (GVGGGIVL) each bind ATP. Zn(2+) is bound by residues H156, C166, C168, and C173.

The protein belongs to the ROK (NagC/XylR) family. NanK subfamily. Homodimer.

The enzyme catalyses an N-acyl-D-mannosamine + ATP = an N-acyl-D-mannosamine 6-phosphate + ADP + H(+). It participates in amino-sugar metabolism; N-acetylneuraminate degradation; D-fructose 6-phosphate from N-acetylneuraminate: step 2/5. Its function is as follows. Catalyzes the phosphorylation of N-acetylmannosamine (ManNAc) to ManNAc-6-P. This is N-acetylmannosamine kinase from Haemophilus influenzae (strain PittGG).